A 653-amino-acid polypeptide reads, in one-letter code: Transmembrane and coiled-coil domains protein 1 (653 aa).

An N-acetylmethionine modification is found at Met1. Disordered regions lie at residues 1 to 35, 58 to 78, 112 to 165, and 204 to 227; these read MEPSGSEQLFEDPDPGGKSQDAEARKQTESEQKLS, HQRRRSSVSPHDVQQIQADPE, PPKM…APTS, and TSSAVASSTDGSIHTDSVDGTPDP. The Cytoplasmic segment spans residues 1-591; sequence MEPSGSEQLF…ARNLLGKLIN (591 aa). Over residues 20-34 the composition is skewed to basic and acidic residues; it reads QDAEARKQTESEQKL. A compositionally biased stretch (polar residues) spans 64–74; it reads SVSPHDVQQIQ. The segment covering 113–125 has biased composition (basic residues); the sequence is PKMKRGTSLHSRR. The segment covering 135–144 has biased composition (polar residues); sequence PQINRKSGQE. A compositionally biased stretch (low complexity) spans 153 to 165; the sequence is RPRSSSTTDAPTS. The span at 204–218 shows a compositional bias: polar residues; the sequence is TSSAVASSTDGSIHT. Positions 228-313 form a coiled coil; that stretch reads QRTKAAIAHL…RKLREVEQNG (86 aa). 2 positions are modified to phosphoserine: Ser382 and Ser414. Residues 415–437 are disordered; that stretch reads PKYGSEEDCSSATSGSVGANSTT. Residues 424-437 are compositionally biased toward polar residues; the sequence is SSATSGSVGANSTT. Positions 458–576 form a coiled coil; the sequence is GFDALLHEIQ…QQQQVVQLEG (119 aa). Transmembrane regions (helical) follow at residues 592–612 and 625–645; these read ILLAVMAVLLVFVSTVANCVV and LFLVVFIAFLWKHWDALFSYV. The Cytoplasmic segment spans residues 646–653; the sequence is ERFFSSPR.

Belongs to the TEX28 family. In terms of assembly, may form homodimers and heterodimers with TMCC2 or TMCC3 via the coiled-coil domains. Interacts with ribosomal proteins RPL4 and RPS6.

The protein localises to the endoplasmic reticulum membrane. Functionally, endoplasmic reticulum membrane protein that promotes endoplasmic reticulum-associated endosome fission. Localizes to contact sites between the endoplasmic reticulum and endosomes and acts by promoting recruitment of the endoplasmic reticulum to endosome tubules for fission. Endosome membrane fission of early and late endosomes is essential to separate regions destined for lysosomal degradation from carriers to be recycled to the plasma membrane. This chain is Transmembrane and coiled-coil domains protein 1, found in Homo sapiens (Human).